The following is a 97-amino-acid chain: Cobalt transport protein CbiN (97 aa).

2 helical membrane passes run 6-26 and 68-88; these read VLMI…YSGL and SLLF…FFGY.

Belongs to the CbiN family. In terms of assembly, forms an energy-coupling factor (ECF) transporter complex composed of an ATP-binding protein (A component, CbiO), a transmembrane protein (T component, CbiQ) and 2 possible substrate-capture proteins (S components, CbiM and CbiN) of unknown stoichimetry.

Its subcellular location is the cell membrane. It participates in cofactor biosynthesis; adenosylcobalamin biosynthesis. In terms of biological role, part of the energy-coupling factor (ECF) transporter complex CbiMNOQ involved in cobalt import. This is Cobalt transport protein CbiN from Methanococcus maripaludis (strain C7 / ATCC BAA-1331).